Reading from the N-terminus, the 443-residue chain is tRNA-2-methylthio-N(6)-dimethylallyladenosine synthase (443 aa).

In terms of domain architecture, MTTase N-terminal spans 1–114 (MRFYIKTFGC…VTEAVKRALQ (114 aa)). [4Fe-4S] cluster-binding residues include Cys-10, Cys-46, Cys-79, Cys-150, Cys-154, and Cys-157. The region spanning 136-367 (RSSKHHAWVT…MNLQKRINRK (232 aa)) is the Radical SAM core domain. The 62-residue stretch at 370-431 (ERYKGKTVRV…AGPLYGKVVW (62 aa)) folds into the TRAM domain.

This sequence belongs to the methylthiotransferase family. MiaB subfamily. As to quaternary structure, monomer. The cofactor is [4Fe-4S] cluster.

Its subcellular location is the cytoplasm. The enzyme catalyses N(6)-dimethylallyladenosine(37) in tRNA + (sulfur carrier)-SH + AH2 + 2 S-adenosyl-L-methionine = 2-methylsulfanyl-N(6)-dimethylallyladenosine(37) in tRNA + (sulfur carrier)-H + 5'-deoxyadenosine + L-methionine + A + S-adenosyl-L-homocysteine + 2 H(+). Its function is as follows. Catalyzes the methylthiolation of N6-(dimethylallyl)adenosine (i(6)A), leading to the formation of 2-methylthio-N6-(dimethylallyl)adenosine (ms(2)i(6)A) at position 37 in tRNAs that read codons beginning with uridine. In Thermotoga sp. (strain RQ2), this protein is tRNA-2-methylthio-N(6)-dimethylallyladenosine synthase.